Here is a 421-residue protein sequence, read N- to C-terminus: NADH-quinone oxidoreductase subunit F (421 aa).

54 to 63 (GRGGAGFSTG) provides a ligand contact to NAD(+). Residue 166–213 (GAGAYICGEETALLESLEGKKGMPRLKPPFPAGFGLYGCPTTINNVES) coordinates FMN. [4Fe-4S] cluster-binding residues include C344, C347, C350, and C390.

Belongs to the complex I 51 kDa subunit family. The cofactor is FMN. [4Fe-4S] cluster serves as cofactor.

It catalyses the reaction a quinone + NADH + 5 H(+)(in) = a quinol + NAD(+) + 4 H(+)(out). Its function is as follows. NDH-1 shuttles electrons from NADH, via FMN and iron-sulfur (Fe-S) centers, to quinones in the respiratory chain. Couples the redox reaction to proton translocation (for every two electrons transferred, four hydrogen ions are translocated across the cytoplasmic membrane), and thus conserves the redox energy in a proton gradient. The polypeptide is NADH-quinone oxidoreductase subunit F (nuoF) (Rickettsia typhi (strain ATCC VR-144 / Wilmington)).